We begin with the raw amino-acid sequence, 112 residues long: Large ribosomal subunit protein bL17 (112 aa).

Belongs to the bacterial ribosomal protein bL17 family. As to quaternary structure, part of the 50S ribosomal subunit. Contacts protein L32.

In Thermoanaerobacter pseudethanolicus (strain ATCC 33223 / 39E) (Clostridium thermohydrosulfuricum), this protein is Large ribosomal subunit protein bL17.